Reading from the N-terminus, the 429-residue chain is Endo-beta-1,4-galactanase (429 aa).

The N-terminal stretch at 1–21 is a signal peptide; that stretch reads MKSKVKMFFAAAIVWSACSST. 146–149 serves as a coordination point for substrate; that stretch reads DPAK. E194 acts as the Proton donor in catalysis. Substrate-binding positions include 233-234 and H267; that span reads TN. Catalysis depends on E292, which acts as the Nucleophile. Substrate is bound at residue T296. Ca(2+)-binding residues include D301, D303, H305, and N307. 2 residues coordinate substrate: K311 and D388. Ca(2+) contacts are provided by S396 and D399.

It belongs to the glycosyl hydrolase 53 family. The cofactor is Ca(2+).

The protein localises to the secreted. It catalyses the reaction The enzyme specifically hydrolyzes (1-&gt;4)-beta-D-galactosidic linkages in type I arabinogalactans.. Involved in galactan degradation. Degrades arabinose-free galactan to galactooligosaccharides, producing galactotetraose as the main product along with galactotriose, galactobiose, and galactose. Is also able to degrade galactotetraose, galactotriose and galactobiose, suggesting an additional exo-mode of activity. May hydrolyze the beta-1,4-galactan linkages of the galactan portion of arabinogalactan type I, a pectic plant polysaccharide from which most of the arabinose has been removed. This chain is Endo-beta-1,4-galactanase, found in Bacillus subtilis (strain 168).